The following is a 457-amino-acid chain: ATP-dependent RNA helicase DbpA (457 aa).

Positions 3-31 match the Q motif motif; that stretch reads AFSTLNVLPPAQLTNLNELGYLTMTPVQA. In terms of domain architecture, Helicase ATP-binding spans 34 to 205; sequence LPAILAGKDV…GRVQRDPLAI (172 aa). 47-54 lines the ATP pocket; it reads AKTGSGKT. Positions 153 to 156 match the DEAD box motif; it reads DEAD. One can recognise a Helicase C-terminal domain in the interval 230 to 376; it reads PLLQRLLSLH…QTPPANSSIA (147 aa). The involved in 23S rRNA binding stretch occupies residues 383–457; the sequence is ATLCIDGGKK…GKTCRVRLLK (75 aa).

Belongs to the DEAD box helicase family. DbpA subfamily. As to quaternary structure, monomer.

The protein resides in the cytoplasm. The catalysed reaction is ATP + H2O = ADP + phosphate + H(+). Requires hairpin 92 of 23S rRNA for optimal activity. ATPase activity is stimulated by interaction of the N-terminal domain with RNA. Its function is as follows. DEAD-box RNA helicase involved in the assembly of the 50S ribosomal subunit. Has an RNA-dependent ATPase activity, which is specific for 23S rRNA, and a 3' to 5' RNA helicase activity that uses the energy of ATP hydrolysis to destabilize and unwind short rRNA duplexes. Requires a single-stranded RNA loading site on the 3' side of the substrate helix. This is ATP-dependent RNA helicase DbpA from Escherichia coli (strain K12).